The sequence spans 321 residues: MSKPIQIERGVKYRDADKMALIPVRTVVTERQEILRKPEWMKIKLPADSSRIQGIKAAMRKNGLHSVCEEASCPNLAECFNHGTATFMILGAICTRRCPFCDVAHGRPLTPDANEPEKLAQTIHDMGLRYVVITSVDRDDLRDGGAQHFADCISAIRRKNPNIRIETLVPDFRGRMDRALEILTATPPDVFNHNLENVPRVYRQVRPGANYEWSLKLLENFKNAHPDIPTKSGLMVGLGETNAEIVDVMRDLRRHGVTMLTLGQYLQPSRHHLPVQRYVSPDEFDEMKAEAIAMGFTHAACGPFVRSSYHADLQAKGIEVK.

Residues Cys-68, Cys-73, Cys-79, Cys-94, Cys-98, Cys-101, and Ser-308 each contribute to the [4Fe-4S] cluster site. Positions Phe-80–Thr-297 constitute a Radical SAM core domain.

This sequence belongs to the radical SAM superfamily. Lipoyl synthase family. Requires [4Fe-4S] cluster as cofactor.

It is found in the cytoplasm. It carries out the reaction [[Fe-S] cluster scaffold protein carrying a second [4Fe-4S](2+) cluster] + N(6)-octanoyl-L-lysyl-[protein] + 2 oxidized [2Fe-2S]-[ferredoxin] + 2 S-adenosyl-L-methionine + 4 H(+) = [[Fe-S] cluster scaffold protein] + N(6)-[(R)-dihydrolipoyl]-L-lysyl-[protein] + 4 Fe(3+) + 2 hydrogen sulfide + 2 5'-deoxyadenosine + 2 L-methionine + 2 reduced [2Fe-2S]-[ferredoxin]. It functions in the pathway protein modification; protein lipoylation via endogenous pathway; protein N(6)-(lipoyl)lysine from octanoyl-[acyl-carrier-protein]: step 2/2. In terms of biological role, catalyzes the radical-mediated insertion of two sulfur atoms into the C-6 and C-8 positions of the octanoyl moiety bound to the lipoyl domains of lipoate-dependent enzymes, thereby converting the octanoylated domains into lipoylated derivatives. This chain is Lipoyl synthase, found in Pectobacterium carotovorum subsp. carotovorum (strain PC1).